We begin with the raw amino-acid sequence, 1051 residues long: Kinesin-like protein KIN-UC (1051 aa).

3 stretches are compositionally biased toward low complexity: residues 1 to 12, 28 to 39, and 64 to 90; these read MSSSNSSSAVRS, NSNHAVSLSSSS, and SASSSSSSSSVSASSPSTRRSGTPVRR. Disordered stretches follow at residues 1–39 and 51–109; these read MSSSNSSSAVRSSAKHAAERIQQHLPPNSNHAVSLSSSS and PGIA…RVSV. Residues 104–441 form the Kinesin motor domain; it reads RVRVSVRVRP…IMFGQRAMKI (338 aa). 189–196 provides a ligand contact to ATP; it reads GQTGTGKT. The short motif at 411-419 is the D-BOX element; it reads RTSLIITIG. Coiled coils occupy residues 452–534 and 568–761; these read DYES…QKDQ and DTSQ…KRYM. The segment covering 753-766 has biased composition (basic and acidic residues); that stretch reads NVVEEKRYMKEDLS. A disordered region spans residues 753–788; sequence NVVEEKRYMKEDLSKGSAESGAQTGSQRSQGLKKSL. Positions 772-788 are enriched in polar residues; the sequence is SGAQTGSQRSQGLKKSL. ARM repeat units lie at residues 792-831, 833-873, and 875-915; these read RATMARLCEEVGIQKILQLIKSEDLEVQIQAVKVVANLAA, EANQ…NLAM, and EKSQ…NLCG. An ARM 4; degenerate repeat occupies 917-956; sequence EKFLKLLKEEEGIKGLLTMAQSGNIDIIAQVARGMANFAK.

This sequence belongs to the TRAFAC class myosin-kinesin ATPase superfamily. Kinesin family. Ungrouped subfamily. In terms of assembly, interacts (via C-terminus) with NEK5. Expressed in young root hair-forming cells and in root hair-producing cells at the boundary between the hypocotyl and root. Expressed in cotyledons, young leaves, trichomes and flowers.

The protein resides in the cytoplasm. It localises to the cytoskeleton. Its subcellular location is the spindle. It is found in the phragmoplast. Acts as a plus-end microtubule-dependent motor protein. Involved in the control of root hair tip growth by promoting microtubule depolymerization and limiting the accumulation of endoplasmic microtubules. In vitro, binds to polymerized actin through ARM repeats, and to polymerized tubulin through N-terminal motor domain. The sequence is that of Kinesin-like protein KIN-UC from Arabidopsis thaliana (Mouse-ear cress).